We begin with the raw amino-acid sequence, 508 residues long: Maturase K (508 aa).

Belongs to the intron maturase 2 family. MatK subfamily.

The protein resides in the plastid. It localises to the chloroplast. Usually encoded in the trnK tRNA gene intron. Probably assists in splicing its own and other chloroplast group II introns. The chain is Maturase K from Verbena rigida (Tuberous vervain).